The chain runs to 389 residues: Ribosomal RNA large subunit methyltransferase M (389 aa).

The segment covering 1–13 (MIGNARMSQKYPT) has biased composition (polar residues). A disordered region spans residues 1–24 (MIGNARMSQKYPTSSSRKRSPLSS). S-adenosyl-L-methionine contacts are provided by residues Ser214, 247–250 (APGG), Asp266, Asp286, and Asp302. The active-site Proton acceptor is Lys331.

This sequence belongs to the class I-like SAM-binding methyltransferase superfamily. RNA methyltransferase RlmE family. RlmM subfamily. As to quaternary structure, monomer.

The protein resides in the cytoplasm. It catalyses the reaction cytidine(2498) in 23S rRNA + S-adenosyl-L-methionine = 2'-O-methylcytidine(2498) in 23S rRNA + S-adenosyl-L-homocysteine + H(+). Functionally, catalyzes the 2'-O-methylation at nucleotide C2498 in 23S rRNA. The protein is Ribosomal RNA large subunit methyltransferase M of Hahella chejuensis (strain KCTC 2396).